The sequence spans 270 residues: MPELPEVETTRAGLSPRLQGRVLTRVIVREPRLRWPIPPDLDTQLRGLTLHGLARRGKYLLFDFGAVTQLVHLGMSGSLRLTEPAEPAARHDHVDWRFDDGTILRLRDPRRFGAVLLTENAPGHPLLAGLGPEPLSTAFDAAYLHTQCQRRKTAIKPLIMDAHVVVGVGNIYASESLFHAGIRPGVAAHRLSRAACARLADAIKQVLTAAIAAGGSSLRDYVQSSGELGYFQLQTRVYDREDAPCRRCATPIRRIVQAQRASFYCPTCQR.

The Schiff-base intermediate with DNA role is filled by proline 2. Residue glutamate 3 is the Proton donor of the active site. Lysine 58 serves as the catalytic Proton donor; for beta-elimination activity. Residues histidine 91, arginine 110, and arginine 151 each coordinate DNA. The FPG-type zinc finger occupies 236–270 (RVYDREDAPCRRCATPIRRIVQAQRASFYCPTCQR). The Proton donor; for delta-elimination activity role is filled by arginine 260.

The protein belongs to the FPG family. As to quaternary structure, monomer. The cofactor is Zn(2+).

The catalysed reaction is Hydrolysis of DNA containing ring-opened 7-methylguanine residues, releasing 2,6-diamino-4-hydroxy-5-(N-methyl)formamidopyrimidine.. The enzyme catalyses 2'-deoxyribonucleotide-(2'-deoxyribose 5'-phosphate)-2'-deoxyribonucleotide-DNA = a 3'-end 2'-deoxyribonucleotide-(2,3-dehydro-2,3-deoxyribose 5'-phosphate)-DNA + a 5'-end 5'-phospho-2'-deoxyribonucleoside-DNA + H(+). Involved in base excision repair of DNA damaged by oxidation or by mutagenic agents. Acts as a DNA glycosylase that recognizes and removes damaged bases. Has a preference for oxidized purines, such as 7,8-dihydro-8-oxoguanine (8-oxoG). Has AP (apurinic/apyrimidinic) lyase activity and introduces nicks in the DNA strand. Cleaves the DNA backbone by beta-delta elimination to generate a single-strand break at the site of the removed base with both 3'- and 5'-phosphates. The protein is Formamidopyrimidine-DNA glycosylase of Thiobacillus denitrificans (strain ATCC 25259 / T1).